Here is a 447-residue protein sequence, read N- to C-terminus: Phosphoglucosamine mutase (447 aa).

S102 acts as the Phosphoserine intermediate in catalysis. Residues S102, D241, D243, and D245 each coordinate Mg(2+). Residue S102 is modified to Phosphoserine.

The protein belongs to the phosphohexose mutase family. It depends on Mg(2+) as a cofactor. Post-translationally, activated by phosphorylation.

It catalyses the reaction alpha-D-glucosamine 1-phosphate = D-glucosamine 6-phosphate. Catalyzes the conversion of glucosamine-6-phosphate to glucosamine-1-phosphate. The protein is Phosphoglucosamine mutase of Delftia acidovorans (strain DSM 14801 / SPH-1).